The sequence spans 329 residues: DNA-directed RNA polymerase subunit alpha (329 aa).

Positions 1-235 (MQGSVTEFLK…EQLEAFVDLR (235 aa)) are alpha N-terminal domain (alpha-NTD). The segment at 249 to 329 (FDPILLRPVD…NWPPASIADE (81 aa)) is alpha C-terminal domain (alpha-CTD).

It belongs to the RNA polymerase alpha chain family. Homodimer. The RNAP catalytic core consists of 2 alpha, 1 beta, 1 beta' and 1 omega subunit. When a sigma factor is associated with the core the holoenzyme is formed, which can initiate transcription.

It catalyses the reaction RNA(n) + a ribonucleoside 5'-triphosphate = RNA(n+1) + diphosphate. Its function is as follows. DNA-dependent RNA polymerase catalyzes the transcription of DNA into RNA using the four ribonucleoside triphosphates as substrates. The chain is DNA-directed RNA polymerase subunit alpha from Sodalis glossinidius (strain morsitans).